The sequence spans 421 residues: D-amino-acid oxidase (421 aa).

FAD-binding residues include Ala12, Gly13, Ala14, Val15, Gly47, Gly64, Ile65, Lys225, Ala226, Arg359, Gly385, Gly388, and Leu389. Arg359 is a binding site for D-proline. Arg359 serves as a coordination point for D-serine.

Belongs to the DAMOX/DASOX family. FAD is required as a cofactor.

Its subcellular location is the cytoplasm. It is found in the secreted. It localises to the cell wall. It carries out the reaction a D-alpha-amino acid + O2 + H2O = a 2-oxocarboxylate + H2O2 + NH4(+). Its function is as follows. Catalyzes the oxidative deamination of D-amino acids with broad substrate specificity. This is D-amino-acid oxidase from Bradyrhizobium diazoefficiens (strain JCM 10833 / BCRC 13528 / IAM 13628 / NBRC 14792 / USDA 110).